The sequence spans 179 residues: Large ribosomal subunit protein uL5 (179 aa).

It belongs to the universal ribosomal protein uL5 family. In terms of assembly, part of the 50S ribosomal subunit; part of the 5S rRNA/L5/L18/L25 subcomplex. Contacts the 5S rRNA and the P site tRNA. Forms a bridge to the 30S subunit in the 70S ribosome.

In terms of biological role, this is one of the proteins that bind and probably mediate the attachment of the 5S RNA into the large ribosomal subunit, where it forms part of the central protuberance. In the 70S ribosome it contacts protein S13 of the 30S subunit (bridge B1b), connecting the 2 subunits; this bridge is implicated in subunit movement. Contacts the P site tRNA; the 5S rRNA and some of its associated proteins might help stabilize positioning of ribosome-bound tRNAs. This Pseudomonas paraeruginosa (strain DSM 24068 / PA7) (Pseudomonas aeruginosa (strain PA7)) protein is Large ribosomal subunit protein uL5.